The chain runs to 308 residues: Phenylcoumaran benzylic ether reductase PT1 (308 aa).

NADP(+) contacts are provided by residues G11–G17, R36, and K46. The active-site Proton acceptor is K134. An NADP(+)-binding site is contributed by R138.

It belongs to the NmrA-type oxidoreductase family. Isoflavone reductase subfamily.

It carries out the reaction (-)-dehydrodiconiferyl alcohol + NADPH + H(+) = (S)-isodihydrodehydrodiconiferyl alcohol + NADP(+). The enzyme catalyses (+)-dehydrodiconiferyl alcohol + NADPH + H(+) = (R)-isodihydrodehydrodiconiferyl alcohol + NADP(+). It catalyses the reaction (2R,3S)-dihydrodehydrodiconiferyl alcohol + NADPH + H(+) = (S)-tetrahydrodehydrodiconiferyl alcohol + NADP(+). The catalysed reaction is (2S,3R)-dihydrodehydrodiconiferyl alcohol + NADPH + H(+) = (R)-tetrahydrodehydrodiconiferyl alcohol + NADP(+). In terms of biological role, oxidoreductase involved in lignan biosynthesis. Catalyzes the NADPH-dependent reduction of phenylcoumaran benzylic ethers. Converts dehydrodiconiferyl alcohol (DDC) to isodihydrodehydrodiconiferyl alcohol (IDDDC), and dihydrodehydrodiconiferyl alcohol (DDDC) to tetrahydrodehydrodiconiferyl alcohol (TDDC). This Pinus taeda (Loblolly pine) protein is Phenylcoumaran benzylic ether reductase PT1.